The following is a 754-amino-acid chain: Probable TonB-dependent siderophore receptor PirA (754 aa).

Positions 1 to 24 (MSKRIIQSVLSVSVLASMMSMAFA) are cleaved as a signal peptide. Positions 54–181 (EQVKQSLGVS…AGGVVNIITK (128 aa)) constitute a TBDR plug domain. The region spanning 186–754 (ETHGSVEFYT…AYYASLKYSF (569 aa)) is the TBDR beta-barrel domain. Positions 404 to 414 (VSTTQGKDSSG) are enriched in polar residues. The interval 404-424 (VSTTQGKDSSGSGYGDQLAKG) is disordered. A disulfide bridge links C511 with C519. A TonB C-terminal box motif is present at residues 737 to 754 (QTYNEPGRAYYASLKYSF).

This sequence belongs to the TonB-dependent receptor family.

The protein localises to the cell outer membrane. Functionally, probably involved in the initial step of iron uptake by binding iron chelating siderophores, thereby allowing extraction of iron from the environment. May bind the siderophore, ferric enterobactin, with micromolar affinity. The chain is Probable TonB-dependent siderophore receptor PirA from Acinetobacter baumannii (strain ATCC 19606 / DSM 30007 / JCM 6841 / CCUG 19606 / CIP 70.34 / NBRC 109757 / NCIMB 12457 / NCTC 12156 / 81).